The primary structure comprises 430 residues: C4-dicarboxylate transport protein (430 aa).

9 consecutive transmembrane segments (helical) span residues S8–P28, L44–M64, A76–V96, A144–L164, V184–M204, L222–A242, V289–L309, I326–V346, and I352–I372.

The protein belongs to the dicarboxylate/amino acid:cation symporter (DAACS) (TC 2.A.23) family.

It is found in the cell inner membrane. Functionally, responsible for the transport of dicarboxylates such as succinate, fumarate, and malate from the periplasm across the membrane. This is C4-dicarboxylate transport protein from Pectobacterium atrosepticum (strain SCRI 1043 / ATCC BAA-672) (Erwinia carotovora subsp. atroseptica).